Here is a 55-residue protein sequence, read N- to C-terminus: Large ribosomal subunit protein bL32 (55 aa).

Over residues 1–19 the composition is skewed to basic residues; the sequence is MAVPKRRMSRANTHSRRSQ. The tract at residues 1-20 is disordered; sequence MAVPKRRMSRANTHSRRSQW.

The protein belongs to the bacterial ribosomal protein bL32 family.

The polypeptide is Large ribosomal subunit protein bL32 (Corynebacterium jeikeium (strain K411)).